Consider the following 121-residue polypeptide: Large ribosomal subunit protein bL12 (121 aa).

It belongs to the bacterial ribosomal protein bL12 family. As to quaternary structure, homodimer. Part of the ribosomal stalk of the 50S ribosomal subunit. Forms a multimeric L10(L12)X complex, where L10 forms an elongated spine to which 2 to 4 L12 dimers bind in a sequential fashion. Binds GTP-bound translation factors.

Functionally, forms part of the ribosomal stalk which helps the ribosome interact with GTP-bound translation factors. Is thus essential for accurate translation. The polypeptide is Large ribosomal subunit protein bL12 (Escherichia coli O81 (strain ED1a)).